A 61-amino-acid chain; its full sequence is Photosystem II reaction center protein K (61 aa).

Positions Met1–Ala24 are excised as a propeptide. Residues Met40–Phe60 form a helical membrane-spanning segment.

This sequence belongs to the PsbK family. PSII is composed of 1 copy each of membrane proteins PsbA, PsbB, PsbC, PsbD, PsbE, PsbF, PsbH, PsbI, PsbJ, PsbK, PsbL, PsbM, PsbT, PsbX, PsbY, PsbZ, Psb30/Ycf12, at least 3 peripheral proteins of the oxygen-evolving complex and a large number of cofactors. It forms dimeric complexes.

It is found in the plastid. It localises to the chloroplast thylakoid membrane. Functionally, one of the components of the core complex of photosystem II (PSII). PSII is a light-driven water:plastoquinone oxidoreductase that uses light energy to abstract electrons from H(2)O, generating O(2) and a proton gradient subsequently used for ATP formation. It consists of a core antenna complex that captures photons, and an electron transfer chain that converts photonic excitation into a charge separation. This chain is Photosystem II reaction center protein K, found in Sinapis alba (White mustard).